The following is a 594-amino-acid chain: Transcription factor TFIIIB component B'' (594 aa).

Positions 1 to 169 (MSSIVNKSGT…ARRLSTISNK (169 aa)) are disordered. Ser-49 is subject to Phosphoserine. Residues 150-168 (LDSSSNSNGTARRLSTISN) show a composition bias toward polar residues. Ser-178 carries the post-translational modification Phosphoserine. Disordered regions lie at residues 217–245 (SPPTAMTDSLDRNEFSSETSTSREADENE) and 317–343 (ARQEFKPLHSLTKEEQEEEEEKRKEER). Composition is skewed to basic and acidic residues over residues 225–241 (SLDRNEFSSETSTSREA) and 317–330 (ARQEFKPLHSLTKE). The SANT domain occupies 415-466 (SYTDPWTVEEMIKFYKALSMWGTDFNLISQLYPYRSRKQVKAKFVNEEKKRP). Basic and acidic residues predominate over residues 520 to 529 (KNTAKEEDQT). Disordered stretches follow at residues 520-547 (KNTAKEEDQTAQRLNDANLNKKGSGGIM) and 567-594 (LKRKKLKERNNDDNEDNEGSEEEPEIDQ). Residues 579-594 (DNEDNEGSEEEPEIDQ) are compositionally biased toward acidic residues.

This sequence belongs to the TFC5 family. As to quaternary structure, TFIIIB comprises the TATA-binding protein (TBP), the B-related factor (BRF) and the B'' component (BDP1). Interacts with TFC4.

The protein localises to the nucleus. General activator of RNA polymerase III transcription. The protein is Transcription factor TFIIIB component B'' (BDP1) of Saccharomyces cerevisiae (strain ATCC 204508 / S288c) (Baker's yeast).